Here is an 84-residue protein sequence, read N- to C-terminus: U4-theraphotoxin-Hhn1a (84 aa).

The first 22 residues, 1 to 22 (MKVTLIAILTCAAVLVLHTTAA), serve as a signal peptide directing secretion. The propeptide occupies 23-47 (EELEESQLMEVGMPDTELAAVDGER). Intrachain disulfides connect Cys51/Cys65, Cys55/Cys76, and Cys70/Cys81.

The protein belongs to the neurotoxin 12 (Hwtx-2) family. 02 (Hwtx-2) subfamily. As to expression, expressed by the venom gland.

The protein resides in the secreted. Postsynaptic neurotoxin. The chain is U4-theraphotoxin-Hhn1a from Cyriopagopus hainanus (Chinese bird spider).